The sequence spans 1888 residues: Eukaryotic translation initiation factor 4G (1888 aa).

10 disordered regions span residues 1 to 259 (MSFN…PTTP), 391 to 420 (FDNK…TQPL), 449 to 662 (PLPS…SLQH), 726 to 761 (VAHS…KNSE), 838 to 903 (ADVS…DGEV), 961 to 1042 (AYKR…SGDR), 1083 to 1138 (TNVS…DPRL), 1331 to 1356 (GERE…EREE), 1462 to 1605 (KWQQ…PGDL), and 1639 to 1691 (RFAG…PSLP). 2 stretches are compositionally biased toward polar residues: residues 13-36 (GYTQ…SGTH) and 75-84 (VNSTDSSNAP). A compositionally biased stretch (basic and acidic residues) spans 171 to 183 (DEQKRDQARHESF). The span at 185-195 (PVPPMPIPLAP) shows a compositional bias: pro residues. 4 stretches are compositionally biased toward polar residues: residues 211–231 (NVGQ…NTGD), 244–259 (ASPN…PTTP), 393–405 (NKQS…TGTS), and 458–475 (NSQP…SQNV). The span at 497 to 506 (PNREHTRDTH) shows a compositional bias: basic and acidic residues. Positions 586–596 (IKSSPVISKQF) are enriched in polar residues. Residues 603–630 (VSLESQDSSSVQSSLTASSEESELAVAH) are compositionally biased toward low complexity. The span at 631–645 (SEVRRENLLGSDLHK) shows a compositional bias: basic and acidic residues. Over residues 840 to 850 (VSASVSSSSTV) the composition is skewed to low complexity. The segment covering 869 to 885 (NMSSNEVLKNVVKSDQP) has biased composition (polar residues). Basic and acidic residues predominate over residues 963–983 (KRPEEKKETVAHSESIERTES). The EIF4E-binding stretch occupies residues 1048-1093 (KKYSRDFLLKFAEQFLDLPHNFEVTSDIESLMSTHTNVSHHHDRDP). The span at 1109–1124 (RLDRRGSNLVDDDRWS) shows a compositional bias: basic and acidic residues. The MIF4G domain occupies 1239–1462 (QRQLKAILNK…KDAIDLRKNK (224 aa)). 2 stretches are compositionally biased toward basic and acidic residues: residues 1467-1484 (RKVE…DAAQ) and 1661-1674 (KDLR…DRSR). In terms of domain architecture, MI spans 1700–1824 (RLQQLSLTAI…SLREVADLIC (125 aa)).

It belongs to the eukaryotic initiation factor 4G family. EIF4F is a multi-subunit complex, the composition of which varies with external and internal environmental conditions. It is composed of at least EIF4A, EIF4E and EIF4G. Interacts directly with eIF4E. In higher plants two isoforms of EIF4F have been identified, named isoform EIF4F and isoform EIF(iso)4F. Isoform EIF4F has subunits p220 and p26, whereas isoform EIF(iso)4F has subunits p82 and p28.

Its function is as follows. Component of the protein complex eIF4F, which is involved in the recognition of the mRNA cap, ATP-dependent unwinding of 5'-terminal secondary structure and recruitment of mRNA to the ribosome. The protein is Eukaryotic translation initiation factor 4G of Cucumis melo (Muskmelon).